The following is a 301-amino-acid chain: MRIIFMGTPDFAVPTLEALVAAGHDVVAAYSQPPRPAGRGKKLQPSPVHLAAEAHGIDVRTPVSLKGADEQTTLAAFDADVAVVAAYGLILPQAVLDAPRLGCLNVHGSLLPRWRGAAPVQRAILAGDEMTGVTIMQMERGLDTGPMLARIETPVDGKTAGDLTAELAVKGAALMVQVLADLASYPAVVQPEQGVTYAHKIDKAESRLDFTRDAVDVERQVRAFSPAPGAFFELEGERYRVLAAEVLGVAGEPGVTVDDVLAIACGTGAIRPTLIQRAGRPAMDTASLLRGRAIPGGTRLG.

109–112 (SLLP) serves as a coordination point for (6S)-5,6,7,8-tetrahydrofolate.

The protein belongs to the Fmt family.

The enzyme catalyses L-methionyl-tRNA(fMet) + (6R)-10-formyltetrahydrofolate = N-formyl-L-methionyl-tRNA(fMet) + (6S)-5,6,7,8-tetrahydrofolate + H(+). Attaches a formyl group to the free amino group of methionyl-tRNA(fMet). The formyl group appears to play a dual role in the initiator identity of N-formylmethionyl-tRNA by promoting its recognition by IF2 and preventing the misappropriation of this tRNA by the elongation apparatus. The sequence is that of Methionyl-tRNA formyltransferase from Novosphingobium aromaticivorans (strain ATCC 700278 / DSM 12444 / CCUG 56034 / CIP 105152 / NBRC 16084 / F199).